The sequence spans 91 residues: DNA-directed RNA polymerase subunit omega (91 aa).

It belongs to the RNA polymerase subunit omega family. The RNAP catalytic core consists of 2 alpha, 1 beta, 1 beta' and 1 omega subunit. When a sigma factor is associated with the core the holoenzyme is formed, which can initiate transcription.

It catalyses the reaction RNA(n) + a ribonucleoside 5'-triphosphate = RNA(n+1) + diphosphate. In terms of biological role, promotes RNA polymerase assembly. Latches the N- and C-terminal regions of the beta' subunit thereby facilitating its interaction with the beta and alpha subunits. In Nocardia farcinica (strain IFM 10152), this protein is DNA-directed RNA polymerase subunit omega.